An 893-amino-acid polypeptide reads, in one-letter code: Zinc finger protein 281 (893 aa).

4 disordered regions span residues 1–113 (MKIG…FPSQ), 126–148 (IKQE…HHHY), 153–172 (AGAE…SHGV), and 198–251 (SGSR…GAVL). A Glycyl lysine isopeptide (Lys-Gly) (interchain with G-Cter in SUMO2) cross-link involves residue Lys-2. Positions 7-36 (FLSGGGGPSSSGGSGSGGSSGSASGGSGGG) are enriched in gly residues. Glycyl lysine isopeptide (Lys-Gly) (interchain with G-Cter in SUMO2) cross-links involve residues Lys-100 and Lys-127. The span at 127 to 139 (KQEKPADPEEQPS) shows a compositional bias: basic and acidic residues. Residues 161–170 (GLGGGEGGSH) are compositionally biased toward gly residues. A compositionally biased stretch (basic and acidic residues) spans 201–216 (RTDEHGNQEPKQDANV). Residues Lys-211, Lys-217, Lys-223, Lys-230, Lys-240, and Lys-256 each participate in a glycyl lysine isopeptide (Lys-Gly) (interchain with G-Cter in SUMO2) cross-link. 3 consecutive C2H2-type zinc fingers follow at residues 258–280 (HICD…VLIH), 286–308 (FQCS…EKIH), and 314–336 (FGCD…KRTH). Glycyl lysine isopeptide (Lys-Gly) (interchain with G-Cter in SUMO2) cross-links involve residues Lys-298 and Lys-322. The C2H2-type 4; atypical zinc finger occupies 342–364 (YKCDTCQQYFSRTDRLLKHRRTC). Residue Lys-370 forms a Glycyl lysine isopeptide (Lys-Gly) (interchain with G-Cter in SUMO2) linkage. The interval 371-425 (GAASAEPGSSNHNSMGNLAVLSQGNTSSSRRKSKSKSIAIENKEHKTGKTNESQM) is disordered. Over residues 377-396 (PGSSNHNSMGNLAVLSQGNT) the composition is skewed to polar residues. Ser-392 is subject to Phosphoserine. Residues Lys-406, Lys-413, Lys-457, and Lys-474 each participate in a glycyl lysine isopeptide (Lys-Gly) (interchain with G-Cter in SUMO2) cross-link. Position 481 is a phosphoserine (Ser-481). Glycyl lysine isopeptide (Lys-Gly) (interchain with G-Cter in SUMO2) cross-links involve residues Lys-490, Lys-495, Lys-536, Lys-596, Lys-614, and Lys-619. A disordered region spans residues 613–658 (GKSETQKEDPFNLTEPRVDLHTSGEHSELVQEENLSPGTQTPSNDK). The span at 616–641 (ETQKEDPFNLTEPRVDLHTSGEHSEL) shows a compositional bias: basic and acidic residues. The span at 645–658 (ENLSPGTQTPSNDK) shows a compositional bias: polar residues. The residue at position 648 (Ser-648) is a Phosphoserine. Residues Lys-658 and Lys-667 each participate in a glycyl lysine isopeptide (Lys-Gly) (interchain with G-Cter in SUMO2) cross-link. Residues 775–813 (SSAFQSSSQKLTSQKEQQKNLESSTSFQIPSQELASQID) show a composition bias toward polar residues. Residues 775–815 (SSAFQSSSQKLTSQKEQQKNLESSTSFQIPSQELASQIDPQ) are disordered. The residue at position 782 (Ser-782) is a Phosphoserine. Glycyl lysine isopeptide (Lys-Gly) (interchain with G-Cter in SUMO2) cross-links involve residues Lys-784, Lys-789, and Lys-793. Residue Ser-805 is modified to Phosphoserine. Residues Lys-816 and Lys-838 each participate in a glycyl lysine isopeptide (Lys-Gly) (interchain with G-Cter in SUMO2) cross-link. Thr-886 carries the phosphothreonine modification.

It belongs to the krueppel C2H2-type zinc-finger protein family. In terms of assembly, interacts with NANOG. Associates with the NuRD complex.

The protein resides in the nucleus. In terms of biological role, transcription repressor that plays a role in regulation of embryonic stem cells (ESCs) differentiation. Required for ESCs differentiation and acts by mediating autorepression of NANOG in ESCs: binds to the NANOG promoter and promotes association of NANOG protein to its own promoter and recruits the NuRD complex, which deacetylates histones. Not required for establishement and maintenance of ESCs. Represses the transcription of a number of genes including GAST, ODC1 and VIM. Binds to the G-rich box in the enhancer region of these genes. The sequence is that of Zinc finger protein 281 (Znf281) from Mus musculus (Mouse).